The following is a 221-amino-acid chain: uncharacterized protein (221 aa).

The Extracellular portion of the chain corresponds to 1–45 (MYAPIRSPITELNESTPSSIPVATSYATCSASFAKLVALLVDDMA). The helical transmembrane segment at 46-66 (GLSIVLSEIYIYFKLLFLIVI) threads the bilayer. Topologically, residues 67–221 (TESIQNKLED…KYIVVIKVEQ (155 aa)) are cytoplasmic.

The protein localises to the host membrane. This is an uncharacterized protein from Acidianus filamentous virus 1 (isolate United States/Yellowstone) (AFV-1).